A 417-amino-acid chain; its full sequence is Adenosylhomocysteinase (417 aa).

Substrate-binding residues include T53, D125, and E149. NAD(+) is bound at residue T150 to T152. Residues K179 and D183 each contribute to the substrate site. NAD(+)-binding positions include N184, G213–G218, E236, N271, A292–H294, and N339.

Belongs to the adenosylhomocysteinase family. The cofactor is NAD(+).

It localises to the cytoplasm. It catalyses the reaction S-adenosyl-L-homocysteine + H2O = L-homocysteine + adenosine. Its pathway is amino-acid biosynthesis; L-homocysteine biosynthesis; L-homocysteine from S-adenosyl-L-homocysteine: step 1/1. Functionally, may play a key role in the regulation of the intracellular concentration of adenosylhomocysteine. The protein is Adenosylhomocysteinase of Saccharolobus solfataricus (strain ATCC 35092 / DSM 1617 / JCM 11322 / P2) (Sulfolobus solfataricus).